Consider the following 2513-residue polypeptide: Polyprotein P1234 (2513 aa).

The Alphavirus-like MT domain occupies Glu28–His259. The interval Gly244–Val263 is nsP1 membrane-binding. 2 S-palmitoyl cysteine; by host lipidation sites follow: Cys417 and Cys419. The (+)RNA virus helicase ATP-binding domain maps to Asp690–Lys842. Gly721–Ser728 contributes to the a ribonucleoside 5'-triphosphate binding site. The 149-residue stretch at Ser843–Ser991 folds into the (+)RNA virus helicase C-terminal domain. The region spanning Asp1004–Leu1327 is the Peptidase C9 domain. The tract at residues Thr1005–Thr1024 is nucleolus localization signal. The For cysteine protease nsP2 activity role is filled by Cys1013. The short motif at Thr1058–Ser1067 is the Nuclear export signal element. The active-site For cysteine protease nsP2 activity is the His1083. A Nuclear localization signal motif is present at residues Pro1182–Val1186. ADP-D-ribose-binding residues include Asp1343, Asn1357, Gly1365, Gly1445, Val1446, and Tyr1447. The Zn(2+) site is built by Cys1595, Cys1597, Cys1620, and Cys1638. 2 consecutive short sequence motifs (FGDF; binding to host G3BP1) follow at residues Phe1851–Phe1854 and Phe1869–Phe1872. Positions Asp2267–Ala2382 constitute a RdRp catalytic domain.

In terms of assembly, interacts with non-structural protein 3. Interacts with RNA-directed RNA polymerase nsP4. Interacts with protease nsP2. interacts with itself. As to quaternary structure, interacts with mRNA-capping enzyme nsP1. Interacts with host DDX1. Interacts with host DDX3. Interacts (via C-terminus) with host G3BP1; this interaction inhibits the formation of host stress granules on viral mRNAs and the nsp3-G3BP1 complexes bind viral RNAs and probably orchestrate the assembly of viral replication complexes. Interacts (via C-terminus) with host G3BP2; this interaction inhibits the formation of host stress granules on viral mRNAs and the nsp3-G3BP2 complexes bind viral RNAs and probably orchestrate the assembly of viral replication complexes. Interacts with mRNA-capping enzyme nsP1. Interacts with protease nsP2. interacts with itself. In terms of assembly, interacts with RNA-directed RNA polymerase nsP4. Interacts with mRNA-capping enzyme nsP1. Interacts with KPNA1/karyopherin-alpha1; this interaction probably allows the active transport of protease nsP2 into the host nucleus. The cofactor is Mg(2+). Mn(2+) serves as cofactor. Post-translationally, specific enzymatic cleavages in vivo yield mature proteins. The processing of the polyprotein is temporally regulated. In early stages (1.7 hpi), P1234 is first cleaved in trans through its nsP2 protease activity, releasing P123 and nsP4, which associate to form the early replication complex. At the same time, P1234 is also cut at the nsP1/nsP2 site early in infection but with lower efficiency. After replication of the viral minus-strand RNAs (4 hpi), the polyproteins are cut at the nsP1/nsP2 and nsP2/nsP3 sites very efficiently, preventing accumulation of P123 and P1234 and allowing the formation of the late replication complex. NsP3/nsP4 site is not cleaved anymore and P34 is produced rather than nsP4. Specific enzymatic cleavages in vivo yield mature proteins. The processing of the polyprotein is temporally regulated. In early stages (1.7 hpi), P123 is cleaved at the nsP1/nsP2 site with low efficiency. After replication of the viral minus-strand RNAs (4 hpi), the polyproteins are cut at the nsP1/nsP2 and nsP2/nsP3 sites very efficiently, preventing accumulation of P123 and allowing the formation of the late replication complex. In terms of processing, palmitoylated by host palmitoyltransferases ZDHHC2 and ZDHHC19. Post-translationally, phosphorylated by host on serines and threonines. Ubiquitinated; targets the protein for rapid degradation via the ubiquitin system. Nsp4 is present in extremely low quantities due to low frequency of translation through the amber stop-codon and the degradation by the ubiquitin pathway.

The protein resides in the host cytoplasmic vesicle membrane. It is found in the host cell membrane. The protein localises to the host cell projection. Its subcellular location is the host filopodium. It localises to the host nucleus. The protein resides in the host cytoplasm. It carries out the reaction GTP + S-adenosyl-L-methionine = N(7)-methyl-GTP + S-adenosyl-L-homocysteine. The enzyme catalyses N(7)-methyl-GTP + L-histidyl-[protein] = N(tele)-(N(7)-methylguanosine 5'-phospho)-L-histidyl-[protein] + diphosphate. It catalyses the reaction N(tele)-(N(7)-methylguanosine 5'-phospho)-L-histidyl-[protein] + a 5'-end diphospho-(purine-ribonucleoside) in mRNA + H(+) = a 5'-end (N(7)-methyl 5'-triphosphoguanosine)-(purine-ribonucleoside) in mRNA + L-histidyl-[protein]. The catalysed reaction is a 5'-end triphospho-ribonucleoside in mRNA + H2O = a 5'-end diphospho-ribonucleoside in mRNA + phosphate + H(+). It carries out the reaction a ribonucleoside 5'-triphosphate + H2O = a ribonucleoside 5'-diphosphate + phosphate + H(+). The enzyme catalyses ATP + H2O = ADP + phosphate + H(+). It catalyses the reaction RNA(n) + a ribonucleoside 5'-triphosphate = RNA(n+1) + diphosphate. The catalysed reaction is 4-O-(ADP-D-ribosyl)-L-aspartyl-[protein] + H2O = L-aspartyl-[protein] + ADP-D-ribose + H(+). It carries out the reaction 5-O-(ADP-D-ribosyl)-L-glutamyl-[protein] + H2O = L-glutamyl-[protein] + ADP-D-ribose + H(+). The enzyme catalyses RNA(n) + ATP = RNA(n)-3'-adenine ribonucleotide + diphosphate. It catalyses the reaction ADP-alpha-D-ribose 1''-phosphate + H2O = ADP-D-ribose + phosphate. In terms of biological role, inactive precursor of the viral replicase, which is activated by cleavages carried out by the viral protease nsP2. The early replication complex formed by the polyprotein P123 and nsP4 synthesizes minus-strand RNAs. As soon P123 is cleaved into mature proteins, the plus-strand RNAs synthesis begins. Its function is as follows. Cytoplasmic capping enzyme that catalyzes two virus-specific reactions: methyltransferase and nsP1 guanylyltransferase. mRNA-capping is necessary since all viral RNAs are synthesized in the cytoplasm, and host capping enzymes are restricted to the nucleus. The enzymatic reaction involves a covalent link between 7-methyl-GMP and nsP1, whereas eukaryotic capping enzymes form a covalent complex only with GMP. nsP1 capping consists in the following reactions: GTP is first methylated into 7-methyl-GMP and then is covalently linked to nsP1 to form the m7GMp-nsP1 complex from which 7-methyl-GMP complex is transferred to the mRNA to create the cap structure. NsP1 is also needed for the initiation of the minus-strand RNAs synthesis. Probably serves as a membrane anchor for the replication complex composed of nsP1-nsP4. Palmitoylated nsP1 is remodeling host cell cytoskeleton, and induces filopodium-like structure formation at the surface of the host cell. Functionally, multifunctional protein whose N-terminus is part of the RNA polymerase complex and displays NTPase, RNA triphosphatase and helicase activities. NTPase and RNA triphosphatase are involved in viral RNA capping and helicase keeps a check on the dsRNA replication intermediates. The C-terminus harbors a protease that specifically cleaves the polyproteins and releases the mature proteins. Required for the shutoff of minus-strand RNAs synthesis. Specifically inhibits the host IFN response by promoting the nuclear export of host STAT1. Also inhibits host transcription by inducing the rapid proteasome-dependent degradation of POLR2A, a catalytic subunit of the RNAPII complex. The resulting inhibition of cellular protein synthesis serves to ensure maximal viral gene expression and to evade host immune response. In terms of biological role, seems to be essential for minus-strand RNAs and subgenomic 26S mRNAs synthesis. Displays mono-ADP-ribosylhydrolase activity. ADP-ribosylation is a post-translational modification that controls various processes of the host cell and the virus probably needs to revert it for optimal viral replication. Binds proteins of G3BP family and sequesters them into the viral RNA replication complexes thereby inhibiting the formation of host stress granules on viral mRNAs. The nsp3-G3BP complexes bind viral RNAs and probably orchestrate the assembly of viral replication complexes, thanks to the ability of G3BP family members to self-assemble and bind DNA. RNA dependent RNA polymerase. Replicates genomic and antigenomic RNA by recognizing replications specific signals. The early replication complex formed by the polyprotein P123 and nsP4 synthesizes minus-strand RNAs. The late replication complex composed of fully processed nsP1-nsP4 is responsible for the production of genomic and subgenomic plus-strand RNAs. This is Polyprotein P1234 from Anopheles (Human).